An 89-amino-acid chain; its full sequence is DNA-binding protein HU (89 aa).

This sequence belongs to the bacterial histone-like protein family. In terms of assembly, homodimer. The dimer interacts with the DNA mimic protein DMP12. It also interacts with the monomeric form of the DNA mimic protein DMP19 with 1:1 stoichiometry.

Activity is regulated by the DNA mimic protein DMP12. Activity is inhibited in the presence of the DNA mimic protein DMP19, which interacts with HU and prevents the binding of HU to DNA. Histone-like DNA-binding protein which is capable of wrapping DNA to stabilize it, and thus to prevent its denaturation under extreme environmental conditions. This Neisseria meningitidis serogroup B (strain ATCC BAA-335 / MC58) protein is DNA-binding protein HU.